A 168-amino-acid chain; its full sequence is ATP synthase subunit b (168 aa).

The helical transmembrane segment at 9 to 29 (AIPFGTIAYTLVVFLILLVML) threads the bilayer.

The protein belongs to the ATPase B chain family. In terms of assembly, F-type ATPases have 2 components, F(1) - the catalytic core - and F(0) - the membrane proton channel. F(1) has five subunits: alpha(3), beta(3), gamma(1), delta(1), epsilon(1). F(0) has three main subunits: a(1), b(2) and c(10-14). The alpha and beta chains form an alternating ring which encloses part of the gamma chain. F(1) is attached to F(0) by a central stalk formed by the gamma and epsilon chains, while a peripheral stalk is formed by the delta and b chains.

The protein localises to the cell membrane. Functionally, f(1)F(0) ATP synthase produces ATP from ADP in the presence of a proton or sodium gradient. F-type ATPases consist of two structural domains, F(1) containing the extramembraneous catalytic core and F(0) containing the membrane proton channel, linked together by a central stalk and a peripheral stalk. During catalysis, ATP synthesis in the catalytic domain of F(1) is coupled via a rotary mechanism of the central stalk subunits to proton translocation. Its function is as follows. Component of the F(0) channel, it forms part of the peripheral stalk, linking F(1) to F(0). This chain is ATP synthase subunit b, found in Bacillus cytotoxicus (strain DSM 22905 / CIP 110041 / 391-98 / NVH 391-98).